A 73-amino-acid polypeptide reads, in one-letter code: Translation initiation factor IF-1 (73 aa).

The region spanning 1–73 is the S1-like domain; the sequence is MAKKEDTLVL…TKARVVYRHR (73 aa).

This sequence belongs to the IF-1 family. As to quaternary structure, component of the 30S ribosomal translation pre-initiation complex which assembles on the 30S ribosome in the order IF-2 and IF-3, IF-1 and N-formylmethionyl-tRNA(fMet); mRNA recruitment can occur at any time during PIC assembly.

The protein resides in the cytoplasm. In terms of biological role, one of the essential components for the initiation of protein synthesis. Stabilizes the binding of IF-2 and IF-3 on the 30S subunit to which N-formylmethionyl-tRNA(fMet) subsequently binds. Helps modulate mRNA selection, yielding the 30S pre-initiation complex (PIC). Upon addition of the 50S ribosomal subunit IF-1, IF-2 and IF-3 are released leaving the mature 70S translation initiation complex. The protein is Translation initiation factor IF-1 of Chlamydia pneumoniae (Chlamydophila pneumoniae).